The chain runs to 860 residues: Protein argonaute-3 (860 aa).

In terms of domain architecture, PAZ spans 230–349; the sequence is PVIQFMCEVL…LPLEVCNIVA (120 aa). The Piwi domain occupies 518 to 819; the sequence is LIIVILPGKT…VAFRARYHLV (302 aa). The tract at residues 530–567 is interaction with guide RNA; sequence YAEVKRVGDTLLGMATQCVQVKNVVKTSPQTLSNLCLK. A divalent metal cation-binding residues include Asp-598, Glu-638, and Asp-670. An interaction with guide RNA region spans residues 758–805; sequence QGTSRPSHYYVLWDDNCFTADEFQLLTYQLCHTYVRCTRSVSIPAPAY. His-808 serves as a coordination point for a divalent metal cation.

This sequence belongs to the argonaute family. Ago subfamily.

Its subcellular location is the cytoplasm. The protein resides in the P-body. It catalyses the reaction Endonucleolytic cleavage to 5'-phosphomonoester.. In terms of biological role, required for RNA-mediated gene silencing (RNAi). Binds to short RNAs such as microRNAs (miRNAs) and represses the translation of mRNAs which are complementary to them. Possesses RNA slicer activity but only on select RNAs bearing 5'- and 3'-flanking sequences to the region of guide-target complementarity. The protein is Protein argonaute-3 (ago3) of Danio rerio (Zebrafish).